The primary structure comprises 171 residues: 3-hydroxydecanoyl-[acyl-carrier-protein] dehydratase (171 aa).

Histidine 70 is an active-site residue.

The protein belongs to the thioester dehydratase family. FabA subfamily. In terms of assembly, homodimer.

It is found in the cytoplasm. It carries out the reaction a (3R)-hydroxyacyl-[ACP] = a (2E)-enoyl-[ACP] + H2O. It catalyses the reaction (3R)-hydroxydecanoyl-[ACP] = (2E)-decenoyl-[ACP] + H2O. The catalysed reaction is (2E)-decenoyl-[ACP] = (3Z)-decenoyl-[ACP]. It functions in the pathway lipid metabolism; fatty acid biosynthesis. Functionally, necessary for the introduction of cis unsaturation into fatty acids. Catalyzes the dehydration of (3R)-3-hydroxydecanoyl-ACP to E-(2)-decenoyl-ACP and then its isomerization to Z-(3)-decenoyl-ACP. Can catalyze the dehydratase reaction for beta-hydroxyacyl-ACPs with saturated chain lengths up to 16:0, being most active on intermediate chain length. The chain is 3-hydroxydecanoyl-[acyl-carrier-protein] dehydratase from Photobacterium profundum (strain SS9).